A 400-amino-acid chain; its full sequence is Elongation factor Tu (400 aa).

In terms of domain architecture, tr-type G spans 10-209 (KPHVNIGTIG…AVDKYIPTPQ (200 aa)). The G1 stretch occupies residues 19 to 26 (GHVDHGKT). 19–26 (GHVDHGKT) serves as a coordination point for GTP. Mg(2+) is bound at residue T26. Residues 60–64 (GITIN) form a G2 region. The segment at 81–84 (DCPG) is G3. Residues 81–85 (DCPGH) and 136–139 (NKVD) contribute to the GTP site. Residues 136–139 (NKVD) are G4. The G5 stretch occupies residues 174 to 176 (SAL).

Belongs to the TRAFAC class translation factor GTPase superfamily. Classic translation factor GTPase family. EF-Tu/EF-1A subfamily. In terms of assembly, monomer.

It localises to the cytoplasm. The catalysed reaction is GTP + H2O = GDP + phosphate + H(+). GTP hydrolase that promotes the GTP-dependent binding of aminoacyl-tRNA to the A-site of ribosomes during protein biosynthesis. The protein is Elongation factor Tu of Caldicellulosiruptor bescii (strain ATCC BAA-1888 / DSM 6725 / KCTC 15123 / Z-1320) (Anaerocellum thermophilum).